Consider the following 283-residue polypeptide: MQLFNAVRNIGKAHLKYNQEARQKVPDGLWVACPKCQQSIYHKDLGYYRTCPVCQYGFRTRAKVRLDWLVDSFEPAGDLAQTPNPLHFPKYPQKLRKAQQITGLEDSILTGVATIKQQKFALGIMDPYFIMGSMGSATGEKITRLFELATEKGLPVILIAASGGARMQEGIFSLMQMAKTSAAVKQHAEQGLLYISLLTDPTTGGVTASFATEADIILAEPKAVIGFAGRRVIEQTMHEQIAPDLQDAETVLKNGFIDQIVARQDQKKVLHQLLKLHERGAHY.

The 255-residue stretch at 29–283 folds into the CoA carboxyltransferase N-terminal domain; that stretch reads LWVACPKCQQ…LKLHERGAHY (255 aa). Zn(2+) contacts are provided by Cys-33, Cys-36, Cys-51, and Cys-54. The C4-type zinc-finger motif lies at 33–54; sequence CPKCQQSIYHKDLGYYRTCPVC.

Belongs to the AccD/PCCB family. In terms of assembly, acetyl-CoA carboxylase is a heterohexamer composed of biotin carboxyl carrier protein (AccB), biotin carboxylase (AccC) and two subunits each of ACCase subunit alpha (AccA) and ACCase subunit beta (AccD). Zn(2+) serves as cofactor.

The protein resides in the cytoplasm. The catalysed reaction is N(6)-carboxybiotinyl-L-lysyl-[protein] + acetyl-CoA = N(6)-biotinyl-L-lysyl-[protein] + malonyl-CoA. It participates in lipid metabolism; malonyl-CoA biosynthesis; malonyl-CoA from acetyl-CoA: step 1/1. In terms of biological role, component of the acetyl coenzyme A carboxylase (ACC) complex. Biotin carboxylase (BC) catalyzes the carboxylation of biotin on its carrier protein (BCCP) and then the CO(2) group is transferred by the transcarboxylase to acetyl-CoA to form malonyl-CoA. The protein is Acetyl-coenzyme A carboxylase carboxyl transferase subunit beta of Latilactobacillus sakei subsp. sakei (strain 23K) (Lactobacillus sakei subsp. sakei).